Reading from the N-terminus, the 427-residue chain is Trigger factor (427 aa).

Residues 163-248 enclose the PPIase FKBP-type domain; it reads GDTVVIDFVG…VNEVKAKELP (86 aa).

It belongs to the FKBP-type PPIase family. Tig subfamily.

Its subcellular location is the cytoplasm. It carries out the reaction [protein]-peptidylproline (omega=180) = [protein]-peptidylproline (omega=0). Involved in protein export. Acts as a chaperone by maintaining the newly synthesized protein in an open conformation. Functions as a peptidyl-prolyl cis-trans isomerase. The polypeptide is Trigger factor (tig) (Lactococcus lactis subsp. lactis (strain IL1403) (Streptococcus lactis)).